A 1011-amino-acid polypeptide reads, in one-letter code: E3 ubiquitin-protein ligase mib1 (1011 aa).

The MIB/HERC2 1 domain occupies 6-74 (NNRVMVEGVG…AYDLRIMDSA (69 aa)). The ZZ-type zinc finger occupies 80–132 (HDGTMCDTCRQQPIIGIRWKCAECTNYDLCTVCYHGDKHHLRHRFYRITTPGS). Residues Cys85, Cys88, Cys100, Cys103, Cys109, Cys112, His118, and His122 each contribute to the Zn(2+) site. The 79-residue stretch at 143 to 221 (SKKITARGIF…MSDLKCVQDA (79 aa)) folds into the MIB/HERC2 2 domain. 9 ANK repeats span residues 430–460 (DLNE…DVNG), 463–492 (AGHT…DVEA), 496–525 (DGDR…DLNA), 529–558 (RRQT…HPSL), 562–591 (EGDT…DVTI), 595–627 (NGFN…IVDE), 631–661 (DGYT…NLDI), 665–694 (NQQT…KLDI), and 698–729 (DGDT…KVDT). 2 RING-type zinc fingers span residues 820-855 (CMVC…LLCK) and 867-902 (CVVC…VQCR). Residues 936 to 963 (QKDKDNTNVNADVQKLQQQLQDIKEQTM) are a coiled coil. The RING-type 3 zinc finger occupies 964–997 (CPVCLDRLKNMIFMCGHGTCQLCGDRMSECPICR).

The protein resides in the cytoplasm. The protein localises to the cytoskeleton. Its subcellular location is the microtubule organizing center. It is found in the centrosome. It localises to the centriolar satellite. The catalysed reaction is S-ubiquitinyl-[E2 ubiquitin-conjugating enzyme]-L-cysteine + [acceptor protein]-L-lysine = [E2 ubiquitin-conjugating enzyme]-L-cysteine + N(6)-ubiquitinyl-[acceptor protein]-L-lysine.. It functions in the pathway protein modification; protein ubiquitination. Functionally, E3 ubiquitin-protein ligase that mediates ubiquitination of Delta receptors, which act as ligands of Notch proteins. Positively regulates the Delta-mediated Notch signaling by ubiquitinating the intracellular domain of Delta, leading to endocytosis of Delta receptors. This is E3 ubiquitin-protein ligase mib1 (mib1) from Xenopus laevis (African clawed frog).